We begin with the raw amino-acid sequence, 614 residues long: Zinc finger and SCAN domain-containing protein 2 (614 aa).

Disordered stretches follow at residues 1–26 (MMAADIPRVTTPLSSLVQVPQEEDRQ) and 43–76 (EAVLQEDGPESEPFPQSAGKGGPQEEVTRGPQGA). The SCAN box domain maps to 59 to 132 (SAGKGGPQEE…ALVEDLTQTL (74 aa)). 14 C2H2-type zinc fingers span residues 222-244 (YECPQCGKTFSRKSHLITHERTH), 250-272 (YKCDECGKSFSDGSNFSRHQTTH), 278-300 (YKCRDCGKSFSRSANLITHQRIH), 306-328 (FQCAECGKSFSRSPNLIAHQRTH), 334-356 (YSCPECGKSFGNRSSLNTHQGIH), 362-384 (YECKECGESFSYNSNLIRHQRIH), 390-412 (YKCTDCGQRFSQSSALITHRRTH), 418-440 (YQCSECGKSFSRSSNLATHRRTH), 446-468 (YKCGVCGKSFSQSSSLIAHQGMH), 474-496 (YECLTCGESFSWSSNLLKHQRIH), 502-524 (YKCSECGKCFSQRSQLVVHQRTH), 530-552 (YKCLMCGKSFSRGSILVMHQRAH), 558-580 (YRCPECGKGFSWNSVLIIHQRIH), and 586-608 (YKCPECGKGFSNSSNFITHQRTH).

The protein belongs to the krueppel C2H2-type zinc-finger protein family.

It localises to the nucleus. May be involved in transcriptional regulation during the post-meiotic stages of spermatogenesis. The polypeptide is Zinc finger and SCAN domain-containing protein 2 (ZSCAN2) (Homo sapiens (Human)).